The primary structure comprises 814 residues: MAPPKDPPVLRNLQATADLLDALQNDPSLLNDEEFIKRLSILRQKHEETTNFLAKKLGAPPLPTMMTSSEITQHRSSYKVTKSSSCHFQDEASPSDYQMPRHLDLKPRSSEVRVPVRAAPEPPREQSWSQTEYATLAHNQSHEALYEDPRHQVHATSSHQNPRHQSSRHHNIESTAPSQVSVTSSVQSVAALSGQNPRQQVHATPSHQIPRHQSSRTHQNSRQQVPSATSSTLQNPRHRTSSASRHHSTRNATSATVRQILANASTRHLSSAPHIATSVAMPSGLLLSSSNTKHVASSKSENPQFATSSHVVEESFLEDGMSTTREVPTIRDEVVAGDLKLSKNRSKSMHQLSKYTPQVTVPKPFQLSLRKSTGNTYAKKFMSGLITEKQKLEEDAKKALENTKFRAKPVPKSTYQPTNTFATEQKYVEAMRKKVAAKARRKFEVQNEMVRSKSEGNLASIKPLGYVPPSTYISPIPVKPNARSRSATMRATILIQEATTPKGIKSHRAQSNLTHHLRHGRCTMDASAVSLHRRTSPPDFEKIHAKITDNFRNTNSKPSTVPIPFKFASRSKSATSRHGNCQEQAPKPFKKSTENLPKTSKNRVPSTHATQLREELNRAKIELKKSEKSGKNGNFWAEDNKQRISSFLGARSKTEEDIAMRTKQKLQQQQETTQEYMRQLAEMKQRVLNGPLIMEKQTALAQEHRLKRKFEERMKSAKGRGIERVQSQEKQQSIGRRSSEVSGSGTFVVDKGYEESFESEDKSEKSGSSTPSESGSGSESENESRSSRSSKPKSSKSTSSKSSSSRSTSSSSEA.

The span at 71–87 (ITQHRSSYKVTKSSSCH) shows a compositional bias: polar residues. 4 disordered regions span residues 71 to 130 (ITQH…SWSQ), 150 to 255 (RHQV…ATSA), 569 to 610 (SRSK…THAT), and 714 to 814 (MKSA…SSEA). A compositionally biased stretch (basic and acidic residues) spans 99-111 (MPRHLDLKPRSSE). Over residues 174 to 193 (STAPSQVSVTSSVQSVAALS) the composition is skewed to low complexity. 2 stretches are compositionally biased toward polar residues: residues 194 to 207 (GQNP…TPSH) and 216 to 235 (RTHQ…TLQN). A compositionally biased stretch (basic residues) spans 236–249 (PRHRTSSASRHHST). Composition is skewed to polar residues over residues 570–583 (RSKS…NCQE) and 594–610 (ENLP…THAT). Residues 606–689 (STHATQLREE…LAEMKQRVLN (84 aa)) adopt a coiled-coil conformation. Over residues 714–727 (MKSAKGRGIERVQS) the composition is skewed to basic and acidic residues. The span at 728-745 (QEKQQSIGRRSSEVSGSG) shows a compositional bias: polar residues. The span at 751-765 (KGYEESFESEDKSEK) shows a compositional bias: basic and acidic residues. 2 stretches are compositionally biased toward low complexity: residues 766 to 779 (SGSS…SGSE) and 795 to 814 (SKST…SSEA).

The protein belongs to the FAM161 family. Expressed in amphid and phasmid ciliated neurons.

The protein localises to the cell projection. The protein resides in the cilium. It localises to the cytoplasm. It is found in the cytoskeleton. Its subcellular location is the cilium axoneme. This Caenorhabditis elegans protein is Protein fam-161.